The primary structure comprises 232 residues: Succinyl-CoA:3-ketoacid coenzyme A transferase subunit A (232 aa).

Residue 24 to 30 (GGFGLCG) participates in CoA binding.

This sequence belongs to the 3-oxoacid CoA-transferase subunit A family. In terms of assembly, heterodimer of a subunit A and a subunit B.

It catalyses the reaction a 3-oxo acid + succinyl-CoA = a 3-oxoacyl-CoA + succinate. This is Succinyl-CoA:3-ketoacid coenzyme A transferase subunit A (scoA) from Helicobacter pylori (strain J99 / ATCC 700824) (Campylobacter pylori J99).